We begin with the raw amino-acid sequence, 457 residues long: Antizyme inhibitor 2 (457 aa).

The necessary for polyamine uptake stimulation stretch occupies residues 115-138 (QVAQIKYAAKHGVRLLSFDNEVEL).

It belongs to the Orn/Lys/Arg decarboxylase class-II family. ODC antizyme inhibitor subfamily. In terms of assembly, monomer. Interacts with OAZ1, OAZ2 and OAZ3; this interaction disrupts the interaction between the antizyme and ODC1. Does not form a heterodimer with ODC1. In terms of processing, ubiquitinated, leading to its proteasomal degradation; a process that is reduced in presence of antizymes. May also be degraded through the lysosomal degradative pathway in a proteasomal-independent manner.

It is found in the nucleus. The protein localises to the cytoplasm. Its subcellular location is the perinuclear region. The protein resides in the membrane. It localises to the cytoplasmic vesicle. It is found in the endoplasmic reticulum-Golgi intermediate compartment. The protein localises to the golgi apparatus. Its subcellular location is the cis-Golgi network. The protein resides in the trans-Golgi network. It localises to the cytoplasmic granule. It is found in the cell projection. The protein localises to the axon. Its subcellular location is the dendrite. The protein resides in the perikaryon. In terms of biological role, antizyme inhibitor (AZI) protein that positively regulates ornithine decarboxylase (ODC) activity and polyamine uptake. AZI is an enzymatically inactive ODC homolog that counteracts the negative effect of ODC antizymes (AZs) OAZ1, OAZ2 and OAZ3 on ODC activity by competing with ODC for antizyme-binding. Inhibits antizyme-dependent ODC degradation and releases ODC monomers from their inactive complex with antizymes, leading to formation of the catalytically active ODC homodimer and restoring polyamine production. Participates in the morphological integrity of the trans-Golgi network (TGN) and functions as a regulator of intracellular secretory vesicle trafficking. The chain is Antizyme inhibitor 2 (Azin2) from Rattus norvegicus (Rat).